The chain runs to 178 residues: ATP synthase subunit delta (178 aa).

The protein belongs to the ATPase delta chain family. F-type ATPases have 2 components, F(1) - the catalytic core - and F(0) - the membrane proton channel. F(1) has five subunits: alpha(3), beta(3), gamma(1), delta(1), epsilon(1). F(0) has three main subunits: a(1), b(2) and c(10-14). The alpha and beta chains form an alternating ring which encloses part of the gamma chain. F(1) is attached to F(0) by a central stalk formed by the gamma and epsilon chains, while a peripheral stalk is formed by the delta and b chains.

It localises to the cell inner membrane. Its function is as follows. F(1)F(0) ATP synthase produces ATP from ADP in the presence of a proton or sodium gradient. F-type ATPases consist of two structural domains, F(1) containing the extramembraneous catalytic core and F(0) containing the membrane proton channel, linked together by a central stalk and a peripheral stalk. During catalysis, ATP synthesis in the catalytic domain of F(1) is coupled via a rotary mechanism of the central stalk subunits to proton translocation. In terms of biological role, this protein is part of the stalk that links CF(0) to CF(1). It either transmits conformational changes from CF(0) to CF(1) or is implicated in proton conduction. This Marinobacter nauticus (strain ATCC 700491 / DSM 11845 / VT8) (Marinobacter aquaeolei) protein is ATP synthase subunit delta.